We begin with the raw amino-acid sequence, 482 residues long: Glutamate--tRNA ligase (482 aa).

Positions P9–G19 match the 'HIGH' region motif. A 'KMSKS' region motif is present at residues K252–R256. K255 is an ATP binding site.

The protein belongs to the class-I aminoacyl-tRNA synthetase family. Glutamate--tRNA ligase type 1 subfamily. In terms of assembly, monomer.

Its subcellular location is the cytoplasm. It carries out the reaction tRNA(Glu) + L-glutamate + ATP = L-glutamyl-tRNA(Glu) + AMP + diphosphate. Functionally, catalyzes the attachment of glutamate to tRNA(Glu) in a two-step reaction: glutamate is first activated by ATP to form Glu-AMP and then transferred to the acceptor end of tRNA(Glu). This chain is Glutamate--tRNA ligase, found in Ureaplasma urealyticum serovar 10 (strain ATCC 33699 / Western).